Here is a 526-residue protein sequence, read N- to C-terminus: Cytochrome P450 monooxygenase BOT4 (526 aa).

Asparagine 5 carries N-linked (GlcNAc...) asparagine glycosylation. A helical transmembrane segment spans residues 41-61 (CLVAIILCRFIAVWSYNLWFH). Residues asparagine 205 and asparagine 281 are each glycosylated (N-linked (GlcNAc...) asparagine). Cysteine 464 provides a ligand contact to heme.

The protein belongs to the cytochrome P450 family. It depends on heme as a cofactor.

Its subcellular location is the membrane. The protein operates within secondary metabolite biosynthesis. Functionally, cytochrome P450 monooxygenase; part of the gene cluster that mediates the biosynthesis of botrydial. Botrydial is necessary for colonization of plant tissue by the T4 strain. It is a strain-dependent virulence factor since highly aggressive strains like SAS56 or B05 still retain substantial virulence when botrydial synthesis is impaired, since they produce also botcinic acid. The first step of botrydial biosynthesis is performed by the sesquiterpene synthase BOT2 which catalyzes the cyclization of farnesyl diphosphate (FPP) to presilphiperfolan-8-beta-ol (PSP). The cytochrome P450 monooxygenase BOT4 then catalyzes the hydroxylation at C-4 to give a probotryane intermediate. Acetylation of the hydroxyl at C-4 is carried out by the acetyltransferase BOT5, followed by the combined action of the P450 monooxygenases BOT3 and BOT1, to yield finally the glycol, via the regio- and stereospecific hydroxylations at C-10 and C-15 of the probotryane intermediates, respectively. The cleavage of the C10-C15 bond of probotryane skeleton is an intriguing and chemically important reaction, which could be mediated by some of the monooxygenases or by a combination of them. It is possible that either BOT3 or BOT1 would oxidize either the 10- or the 15-hydroxy group to the hydroperoxide derivative, which would then undergo heterolytic fragmentation to give the dialdehyde botrydial. Finally, the dehydrogenase BOT7 might be involved in the conversion of botrydial to dihydrobotrydial. The sequence is that of Cytochrome P450 monooxygenase BOT4 from Botryotinia fuckeliana (Noble rot fungus).